A 212-amino-acid chain; its full sequence is Deoxyribose-phosphate aldolase (212 aa).

The active-site Proton donor/acceptor is the Asp-89. The active-site Schiff-base intermediate with acetaldehyde is Lys-151. Lys-180 (proton donor/acceptor) is an active-site residue.

Belongs to the DeoC/FbaB aldolase family. DeoC type 1 subfamily.

The protein resides in the cytoplasm. The enzyme catalyses 2-deoxy-D-ribose 5-phosphate = D-glyceraldehyde 3-phosphate + acetaldehyde. The protein operates within carbohydrate degradation; 2-deoxy-D-ribose 1-phosphate degradation; D-glyceraldehyde 3-phosphate and acetaldehyde from 2-deoxy-alpha-D-ribose 1-phosphate: step 2/2. In terms of biological role, catalyzes a reversible aldol reaction between acetaldehyde and D-glyceraldehyde 3-phosphate to generate 2-deoxy-D-ribose 5-phosphate. This is Deoxyribose-phosphate aldolase from Clostridium botulinum (strain Kyoto / Type A2).